The primary structure comprises 277 residues: MKKTQRKEIENVTNITGVRQIELWRRDDLQHPRLDEVAEEVPVALVYNGISHVVMMASPKDLEYFALGFSLSEGIIESPRDIFGMDVVPSCNGLEVQIELSSRRFMGLKERRRALAGRTGCGVCGVEQLNDIGKPVQPLPFTQTFDLNKLDDALRHLNDFQPVGRLTGCTHAAAWMLPSGELVGGHEDVGRHVALDKLLGRRSQEGESWQQGAVLVSSRASYEMVQKSAMCGVEILFAVSAATTLAVEVAERCNLTLVGFCKPGRATVYTHPQRLSN.

Residue cysteine 121 is the Cysteine persulfide intermediate of the active site. Mo-bis(molybdopterin guanine dinucleotide) is bound at residue 260-265 (FCKPGR).

This sequence belongs to the FdhD family.

It is found in the cytoplasm. Required for formate dehydrogenase (FDH) activity. Acts as a sulfur carrier protein that transfers sulfur from IscS to the molybdenum cofactor prior to its insertion into FDH. This chain is Sulfur carrier protein FdhD, found in Shigella flexneri serotype 5b (strain 8401).